The chain runs to 326 residues: Metallophosphoesterase domain-containing protein 1 (326 aa).

It belongs to the UPF0046 family. As to expression, expressed predominantly in adult brain.

In terms of biological role, may have metallophosphoesterase activity (in vitro). In Homo sapiens (Human), this protein is Metallophosphoesterase domain-containing protein 1 (MPPED1).